Consider the following 450-residue polypeptide: MSHSACPKPATARHSQALTGEIRIPGDKSISHRSFMFGGLASGKTRITGLLEGEDVINTGRAMQAMGARIRKEGDVWIINGVGNGCLLQPEAPLDFGNAGTGARLTMGLVGTYDMKTSFIGDASLSKRPMGRVLNPLREMGVQVEAAEGDRMPLTLIGPRTANPIAYRVPMASAQVKSAVLLAGLNTPGVTTVIEPVMTRDHTEKMLQGFGADLTVETDKDGVRHIRIVGQGKLTGQTIDVPGDPSSTAFPLVAALLVEGSDVTIRNVLMNPTRTGLILTLQEMGADIEIIDPRLAGGEDVADLRVRASKLKGVVVPPERAPSMIDEYPVLAIAASFAEGETVMDGLDELRVKESDRLAAVARGLEANGVDCTEGEMSLTVRGRPGGKGLGGGTVATHLDHRIAMSFLVMGLASEKPVTVDDSTMIATSFPEFMGMMAGLGAKIAESGAE.

Positions 28, 29, and 33 each coordinate 3-phosphoshikimate. Residue lysine 28 coordinates phosphoenolpyruvate. Phosphoenolpyruvate contacts are provided by glycine 100 and arginine 128. 3-phosphoshikimate-binding residues include serine 173, glutamine 175, aspartate 326, and lysine 353. Phosphoenolpyruvate is bound at residue glutamine 175. The active-site Proton acceptor is aspartate 326. 2 residues coordinate phosphoenolpyruvate: arginine 357 and arginine 402.

It belongs to the EPSP synthase family. As to quaternary structure, monomer.

The protein localises to the cytoplasm. It carries out the reaction 3-phosphoshikimate + phosphoenolpyruvate = 5-O-(1-carboxyvinyl)-3-phosphoshikimate + phosphate. The protein operates within metabolic intermediate biosynthesis; chorismate biosynthesis; chorismate from D-erythrose 4-phosphate and phosphoenolpyruvate: step 6/7. Catalyzes the transfer of the enolpyruvyl moiety of phosphoenolpyruvate (PEP) to the 5-hydroxyl of shikimate-3-phosphate (S3P) to produce enolpyruvyl shikimate-3-phosphate and inorganic phosphate. This chain is 3-phosphoshikimate 1-carboxyvinyltransferase, found in Brucella canis (strain ATCC 23365 / NCTC 10854 / RM-666).